The chain runs to 428 residues: Enolase (428 aa).

Residue Q162 participates in (2R)-2-phosphoglycerate binding. E204 (proton donor) is an active-site residue. Mg(2+) is bound by residues D241, E282, and D309. (2R)-2-phosphoglycerate is bound by residues K334, R363, S364, and K385. Residue K334 is the Proton acceptor of the active site.

Belongs to the enolase family. Requires Mg(2+) as cofactor.

It is found in the cytoplasm. The protein localises to the secreted. It localises to the cell surface. The enzyme catalyses (2R)-2-phosphoglycerate = phosphoenolpyruvate + H2O. The protein operates within carbohydrate degradation; glycolysis; pyruvate from D-glyceraldehyde 3-phosphate: step 4/5. Functionally, catalyzes the reversible conversion of 2-phosphoglycerate (2-PG) into phosphoenolpyruvate (PEP). It is essential for the degradation of carbohydrates via glycolysis. This is Enolase from Mycobacterium marinum (strain ATCC BAA-535 / M).